The sequence spans 265 residues: Selenoprotein Pb (265 aa).

The first 18 residues, 1–18 (MQALWPLLLSALPALLGA), serve as a signal peptide directing secretion. A glycan (N-linked (GlcNAc...) asparagine) is linked at Asn-28. Sec-64 is a non-standard amino acid (selenocysteine). Asn-88, Asn-178, Asn-184, and Asn-207 each carry an N-linked (GlcNAc...) asparagine glycan. Positions 188–265 (SESSDSTKND…SHQEHVHNHR (78 aa)) are disordered. Residues 201 to 211 (ENNQRPNSTEP) are compositionally biased toward polar residues. The segment covering 215 to 231 (AHHHHHQQHEPHHHHHN) has biased composition (basic residues). The span at 239–265 (KSGDSDVTGKPKEPPHHSHQEHVHNHR) shows a compositional bias: basic and acidic residues.

The protein resides in the secreted. Functionally, might be responsible for some of the extracellular antioxidant defense properties of selenium. The sequence is that of Selenoprotein Pb (sepp1b) from Danio rerio (Zebrafish).